The primary structure comprises 305 residues: ATP-dependent Clp protease proteolytic subunit-related protein 4, chloroplastic (305 aa).

Residues 1–68 (MEVAAATATS…SSDLCGAKLR (68 aa)) constitute a chloroplast transit peptide.

This sequence belongs to the peptidase S14 family. As to quaternary structure, component of the chloroplastic Clp protease core complex which consist of at least 16 proteins: CLPP4 (3 copies), CLPP5 (3 copies), CLPR4 (2 copies), ClpP1 (1 copy), CLPP6 (1 copy), CLPR2 (1 copy), CLPT1 (1 copy), CLPT2 (1 copy) and 3 copies of CLPP3 and/or CLPR1 and/or CLPR3. The core complex is organized in two heptameric rings, one containing CLPP3,4,5,6 in a 1:2:3:1 ratio and the other CLPP1 and CLPR1,2,3,4 in a 3:1:1:1:1 ratio.

Its subcellular location is the plastid. It is found in the chloroplast. In terms of biological role, involved in plastid protein homeostasis. The polypeptide is ATP-dependent Clp protease proteolytic subunit-related protein 4, chloroplastic (Arabidopsis thaliana (Mouse-ear cress)).